Reading from the N-terminus, the 243-residue chain is Cell division protein ZipA (243 aa).

Residues 1–4 lie on the Periplasmic side of the membrane; the sequence is MSDV. A helical membrane pass occupies residues 5–25; sequence TLLRIGIAIVGILFVAAVFFF. Over 26–243 the chain is Cytoplasmic; sequence STPKTSAHRV…VPPLIKNSRW (218 aa). Residues 32-89 are disordered; it reads AHRVRTKKEEPPRERREPMLSTEVDNSPHQSVDEVPASVPQQQVNPEATKPGEIELGK. Positions 38 to 49 are enriched in basic and acidic residues; that stretch reads KKEEPPRERREP.

Belongs to the ZipA family. Interacts with FtsZ via their C-terminal domains.

Its subcellular location is the cell inner membrane. Essential cell division protein that stabilizes the FtsZ protofilaments by cross-linking them and that serves as a cytoplasmic membrane anchor for the Z ring. Also required for the recruitment to the septal ring of downstream cell division proteins. In Xylella fastidiosa (strain Temecula1 / ATCC 700964), this protein is Cell division protein ZipA.